Here is a 226-residue protein sequence, read N- to C-terminus: RNA pyrophosphohydrolase (226 aa).

Residues 6–149 form the Nudix hydrolase domain; that stretch reads GFRPNVGIIL…KRGVYEMALT (144 aa). Positions 38 to 59 match the Nudix box motif; it reads GGIDRGETPEQAMFRELHEEVG. The segment at 197–226 is disordered; that stretch reads MELPPGASFDPDPRTGDGDPGMPGIHKPAG.

Belongs to the Nudix hydrolase family. RppH subfamily. Requires a divalent metal cation as cofactor.

Functionally, accelerates the degradation of transcripts by removing pyrophosphate from the 5'-end of triphosphorylated RNA, leading to a more labile monophosphorylated state that can stimulate subsequent ribonuclease cleavage. The sequence is that of RNA pyrophosphohydrolase from Paracidovorax citrulli (strain AAC00-1) (Acidovorax citrulli).